The primary structure comprises 200 residues: Putative glucose-6-phosphate isomerase 2 (200 aa).

The Fe cation site is built by H92, H94, E101, and H140.

This sequence belongs to the archaeal-type GPI family. As to quaternary structure, homodimer. Requires Fe cation as cofactor.

It is found in the cytoplasm. The enzyme catalyses alpha-D-glucose 6-phosphate = beta-D-fructose 6-phosphate. The protein operates within carbohydrate degradation; glycolysis; D-glyceraldehyde 3-phosphate and glycerone phosphate from D-glucose: step 2/4. This is Putative glucose-6-phosphate isomerase 2 (pgiA2) from Rhizobium meliloti (strain 1021) (Ensifer meliloti).